Consider the following 318-residue polypeptide: Ribosomal protein L11 methyltransferase (318 aa).

The S-adenosyl-L-methionine site is built by T159, G180, D202, and N253.

It belongs to the methyltransferase superfamily. PrmA family.

Its subcellular location is the cytoplasm. It catalyses the reaction L-lysyl-[protein] + 3 S-adenosyl-L-methionine = N(6),N(6),N(6)-trimethyl-L-lysyl-[protein] + 3 S-adenosyl-L-homocysteine + 3 H(+). Functionally, methylates ribosomal protein L11. The sequence is that of Ribosomal protein L11 methyltransferase from Lachnospira eligens (strain ATCC 27750 / DSM 3376 / VPI C15-48 / C15-B4) (Eubacterium eligens).